Consider the following 1641-residue polypeptide: Alpha-2-macroglobulin (1641 aa).

Residues Met-1 to Gly-31 form the signal peptide. The N-palmitoyl cysteine moiety is linked to residue Cys-32. Cys-32 is lipidated: S-diacylglycerol cysteine. Positions Cys-1166–Gln-1169 form a cross-link, isoglutamyl cysteine thioester (Cys-Gln).

The protein belongs to the protease inhibitor I39 (alpha-2-macroglobulin) family. Bacterial alpha-2-macroglobulin subfamily.

It localises to the cell membrane. Functionally, protects the bacterial cell from host peptidases. In Xylella fastidiosa (strain Temecula1 / ATCC 700964), this protein is Alpha-2-macroglobulin.